A 432-amino-acid polypeptide reads, in one-letter code: 23S rRNA (uracil(1939)-C(5))-methyltransferase RlmD (432 aa).

One can recognise a TRAM domain in the interval 1–53; the sequence is MPIGKIESLDHEARGITRQEGKAIFVDGALPGETVEYASFRRKSKFELAHLVH. 4 residues coordinate [4Fe-4S] cluster: Cys-66, Cys-72, Cys-75, and Cys-154. S-adenosyl-L-methionine is bound by residues Gln-263, Phe-292, Asn-297, Glu-313, Asn-341, and Asp-362. The Nucleophile role is filled by Cys-388.

The protein belongs to the class I-like SAM-binding methyltransferase superfamily. RNA M5U methyltransferase family. RlmD subfamily.

The enzyme catalyses uridine(1939) in 23S rRNA + S-adenosyl-L-methionine = 5-methyluridine(1939) in 23S rRNA + S-adenosyl-L-homocysteine + H(+). In terms of biological role, catalyzes the formation of 5-methyl-uridine at position 1939 (m5U1939) in 23S rRNA. The chain is 23S rRNA (uracil(1939)-C(5))-methyltransferase RlmD from Dechloromonas aromatica (strain RCB).